A 442-amino-acid chain; its full sequence is Probable folate-biopterin transporter 7 (442 aa).

The next 12 membrane-spanning stretches (helical) occupy residues 23–43 (LGFG…ANFF), 64–82 (LPMV…VYFF), 87–107 (IPYI…IAFL), 114–134 (ILAL…VEVA), 158–178 (FVWM…GIAI), 184–204 (QSTF…TINI), 241–261 (IAWI…MFFY), 270–290 (ASLL…WGFA), 302–322 (KLLT…LLFV), 335–355 (VYVL…ILPF), 379–399 (IALA…FVGV), and 410–430 (GLAI…WIYD).

It belongs to the major facilitator superfamily. Folate-biopterin transporter (TC 2.A.71) family.

The protein localises to the membrane. Could mediate folate transport. This is Probable folate-biopterin transporter 7 from Arabidopsis thaliana (Mouse-ear cress).